The following is a 312-amino-acid chain: Malate dehydrogenase (312 aa).

NAD(+) contacts are provided by residues 12 to 17 (GAGFTG) and Asp36. Residues Arg87 and Arg93 each coordinate substrate. NAD(+) is bound by residues Asn100 and 123–125 (LTN). Asn125 is a substrate binding site. Ser149 carries the phosphoserine modification. Residue Arg156 coordinates substrate. Catalysis depends on His180, which acts as the Proton acceptor.

This sequence belongs to the LDH/MDH superfamily. MDH type 3 family.

It catalyses the reaction (S)-malate + NAD(+) = oxaloacetate + NADH + H(+). Catalyzes the reversible oxidation of malate to oxaloacetate. This Bacillus licheniformis (strain ATCC 14580 / DSM 13 / JCM 2505 / CCUG 7422 / NBRC 12200 / NCIMB 9375 / NCTC 10341 / NRRL NRS-1264 / Gibson 46) protein is Malate dehydrogenase.